The primary structure comprises 138 residues: Large ribosomal subunit protein uL16 (138 aa).

Over residues 1–19 (MLIPRRVKHRKQHHPKRSG) the composition is skewed to basic residues. The disordered stretch occupies residues 1-24 (MLIPRRVKHRKQHHPKRSGAAKGG).

Belongs to the universal ribosomal protein uL16 family. As to quaternary structure, part of the 50S ribosomal subunit.

Binds 23S rRNA and is also seen to make contacts with the A and possibly P site tRNAs. In Micrococcus luteus (strain ATCC 4698 / DSM 20030 / JCM 1464 / CCM 169 / CCUG 5858 / IAM 1056 / NBRC 3333 / NCIMB 9278 / NCTC 2665 / VKM Ac-2230) (Micrococcus lysodeikticus), this protein is Large ribosomal subunit protein uL16.